The chain runs to 238 residues: Large ribosomal subunit protein uL3 (238 aa).

It belongs to the universal ribosomal protein uL3 family. Part of the 50S ribosomal subunit. Forms a cluster with proteins L14 and L19.

In terms of biological role, one of the primary rRNA binding proteins, it binds directly near the 3'-end of the 23S rRNA, where it nucleates assembly of the 50S subunit. The chain is Large ribosomal subunit protein uL3 from Mesoplasma florum (strain ATCC 33453 / NBRC 100688 / NCTC 11704 / L1) (Acholeplasma florum).